The following is a 47-amino-acid chain: Capistruin (47 aa).

The propeptide occupies 1–28; it reads MVRLLAKLLRSTIHGSNGVSLDAVSSTH. Residues 29–37 constitute a cross-link (isoaspartyl glycine isopeptide (Gly-Asp)); it reads GTPGFQTPD.

In terms of processing, it is assumed that the two processing enzymes CapB/CapC convert the precursor protein CapA into the mature lasso peptide capistruin. CapB is assumed to cleave the precursor protein CapA and to set an N-terminal Gly free, whose a-NH2 group acts as the nucleophile in the subsequent cyclization reaction. CapC is most likely involved in the side-chain carboxyl group activation of aspartic acid at position 9 generating the electrophile for the condensation reaction. CapD may export capistruin outside of the producing cells.

Its subcellular location is the secreted. In terms of biological role, peptide antibiotic that functions through inhibition of the bacterial DNA-dependent RNA polymerase (RNAP). Inhibits transcription by binding in RNAP secondary channel, where it sterically blocks the folding of the trigger loop, which is essential for efficient catalysis. In contrast to MccJ25, does not restrict access of nucleotide substrates to the catalytic center and shows a non-competitive mode of inhibition. Shows activity against closely related Gram-negative Burkholderia and Pseudomonas strains. Is not active against Gram-positive bacteria. In Burkholderia thailandensis (strain ATCC 700388 / DSM 13276 / CCUG 48851 / CIP 106301 / E264), this protein is Capistruin.